A 138-amino-acid polypeptide reads, in one-letter code: MRHARGYRRLNRTHEHRKAMFSNMCGSLIEHEQIKTTVPKAKELRPIIEKMITLAKRGDLHARRQAASQLKQDKDVAKLFEVLGPRYAERQGGYVRIMKAGFRYGDMAPMAIIEFVDRDVDAKGAADRARVEAEADAE.

The protein belongs to the bacterial ribosomal protein bL17 family. As to quaternary structure, part of the 50S ribosomal subunit. Contacts protein L32.

This chain is Large ribosomal subunit protein bL17, found in Jannaschia sp. (strain CCS1).